The sequence spans 393 residues: GTP exchange factor for ARFs 1 (393 aa).

Over residues 1 to 12 the composition is skewed to polar residues; that stretch reads MSSRYSERNGLS. The interval 1 to 21 is disordered; that stretch reads MSSRYSERNGLSETEKMTLPK. Residues 12–54 are a coiled coil; it reads SETEKMTLPKVRKRKAQLVDEIEALKNEVREVDEELDQVYYTH. Residues 53-239 form the SEC7 domain; sequence THPKSKEYHK…TEVYESVSVT (187 aa). Positions 261–377 constitute a PH domain; that stretch reads HAEREGWLFK…MRSWINAISR (117 aa).

Its function is as follows. Promotes guanine-nucleotide exchange on ARF. Promotes the activation of ARF through replacement of GDP with GTP. Plays a role in cell shedding during embryogenesis, probably by promoting the endocytosis of cell adhesion molecules. This is GTP exchange factor for ARFs 1 (grp-1) from Caenorhabditis elegans.